The following is a 481-amino-acid chain: 3-isopropylmalate dehydratase large subunit (481 aa).

3 residues coordinate [4Fe-4S] cluster: Cys-355, Cys-415, and Cys-418.

Belongs to the aconitase/IPM isomerase family. LeuC type 1 subfamily. Heterodimer of LeuC and LeuD. [4Fe-4S] cluster is required as a cofactor.

It carries out the reaction (2R,3S)-3-isopropylmalate = (2S)-2-isopropylmalate. The protein operates within amino-acid biosynthesis; L-leucine biosynthesis; L-leucine from 3-methyl-2-oxobutanoate: step 2/4. In terms of biological role, catalyzes the isomerization between 2-isopropylmalate and 3-isopropylmalate, via the formation of 2-isopropylmaleate. This Symbiobacterium thermophilum (strain DSM 24528 / JCM 14929 / IAM 14863 / T) protein is 3-isopropylmalate dehydratase large subunit.